The sequence spans 327 residues: MRVLGIETSCDETAVAVLDDGKDVIVNFTVSQVEVHRKFGGVVPEVAARHHLKNLPFLLKETFKKVDPQTVDVVAATYGPGLVGALLVGLSAAKGLSISLKRPFVGVNHIEAHVHAVFLANPTLTPPFVVLMVSGGHTQLMKVNEDYSMEILGRTLDDSAGEAFDKVARLLGLGYPGGPIIDEVAKKGDPKKYSFPRPMMDEPNYNFSFAGLKTAVLYFLKKEKDYRVEDVAASFQEAVVDILVEKTFRLARNLGIRKIAFVGGVAANSRLREKVNDRAKRWGYEVFFPPLSLCTDNALMVARAGYEKAKRGIFFPLYLNADPNLSV.

2 residues coordinate Fe cation: His109 and His113. Residues Met132–Gly136, Asp165, Gly178, Asp182, and Asn268 contribute to the substrate site. Residue Asp296 participates in Fe cation binding.

The protein belongs to the KAE1 / TsaD family. Fe(2+) is required as a cofactor.

It localises to the cytoplasm. The catalysed reaction is L-threonylcarbamoyladenylate + adenosine(37) in tRNA = N(6)-L-threonylcarbamoyladenosine(37) in tRNA + AMP + H(+). In terms of biological role, required for the formation of a threonylcarbamoyl group on adenosine at position 37 (t(6)A37) in tRNAs that read codons beginning with adenine. Is involved in the transfer of the threonylcarbamoyl moiety of threonylcarbamoyl-AMP (TC-AMP) to the N6 group of A37, together with TsaE and TsaB. TsaD likely plays a direct catalytic role in this reaction. This is tRNA N6-adenosine threonylcarbamoyltransferase from Thermotoga neapolitana (strain ATCC 49049 / DSM 4359 / NBRC 107923 / NS-E).